The following is a 321-amino-acid chain: Homoserine kinase (321 aa).

Belongs to the pseudomonas-type ThrB family.

It catalyses the reaction L-homoserine + ATP = O-phospho-L-homoserine + ADP + H(+). It participates in amino-acid biosynthesis; L-threonine biosynthesis; L-threonine from L-aspartate: step 4/5. This Gluconacetobacter diazotrophicus (strain ATCC 49037 / DSM 5601 / CCUG 37298 / CIP 103539 / LMG 7603 / PAl5) protein is Homoserine kinase.